Here is a 145-residue protein sequence, read N- to C-terminus: 3-hydroxyacyl-[acyl-carrier-protein] dehydratase FabZ (145 aa).

His-49 is a catalytic residue.

Belongs to the thioester dehydratase family. FabZ subfamily.

The protein localises to the cytoplasm. The catalysed reaction is a (3R)-hydroxyacyl-[ACP] = a (2E)-enoyl-[ACP] + H2O. In terms of biological role, involved in unsaturated fatty acids biosynthesis. Catalyzes the dehydration of short chain beta-hydroxyacyl-ACPs and long chain saturated and unsaturated beta-hydroxyacyl-ACPs. This Rickettsia massiliae (strain Mtu5) protein is 3-hydroxyacyl-[acyl-carrier-protein] dehydratase FabZ.